The chain runs to 395 residues: MAKEKFDRSKSHVNVGTLGHVDHGKTTLTAAITTVLAKHGGGEARAYDQIDGAPEERERGITISTAHVEYETETRHYAHVDCPGHADYVKNMITGAAQMDGAILVVSAADGPMPQTREHILLSRNVGVPAFVVFLNKTDMVDDEELLELVEMEVRDLLTEYDFPGDDLPVIKGSALKALEGVAEYEERILELMAAVDEYIPTPERDKEKPFMMPVEDVFSITGRGTVATGRVERGEVKVGDEVEIIGLAEDASKTTVTGVEMFRKLLDYAEAGDNIGALLRGVSREDINRGQVLAKPGSITPHTNFKAEVYVLSKEEGGRHTPFFSNYRPQFYFRTTDVTGVIELPEGTEMVMPGDNIEMTVELISPIAIEDGTRFSIREGGRTVGSGVVSSIQK.

A tr-type G domain is found at 10 to 204 (KSHVNVGTLG…AVDEYIPTPE (195 aa)). The segment at 19–26 (GHVDHGKT) is G1. 19–26 (GHVDHGKT) serves as a coordination point for GTP. Thr26 lines the Mg(2+) pocket. The segment at 60–64 (GITIS) is G2. Residues 81–84 (DCPG) are G3. Residues 81–85 (DCPGH) and 136–139 (NKTD) each bind GTP. The G4 stretch occupies residues 136–139 (NKTD). The G5 stretch occupies residues 174-176 (SAL).

Belongs to the TRAFAC class translation factor GTPase superfamily. Classic translation factor GTPase family. EF-Tu/EF-1A subfamily. In terms of assembly, monomer.

It is found in the cytoplasm. It carries out the reaction GTP + H2O = GDP + phosphate + H(+). Its function is as follows. GTP hydrolase that promotes the GTP-dependent binding of aminoacyl-tRNA to the A-site of ribosomes during protein biosynthesis. The polypeptide is Elongation factor Tu (Oceanobacillus iheyensis (strain DSM 14371 / CIP 107618 / JCM 11309 / KCTC 3954 / HTE831)).